The primary structure comprises 120 residues: Immunoglobulin kappa variable 2D-29 (120 aa).

The signal sequence occupies residues 1–20; that stretch reads MRLPAQLLGLLMLWIPGSSA. The tract at residues 21–43 is framework-1; sequence DIVMTQTPLSLSVTPGQPASISC. Positions 21-120 constitute an Ig-like domain; sequence DIVMTQTPLS…YYCMQSIQLP (100 aa). Cysteines 43 and 113 form a disulfide. The complementarity-determining-1 stretch occupies residues 44-59; the sequence is KSSQSLLHSDGKTYLY. The interval 60–74 is framework-2; the sequence is WYLQKPGQPPQLLIY. Residues 75 to 81 form a complementarity-determining-2 region; that stretch reads EVSNRFS. Residues 82–113 form a framework-3 region; the sequence is GVPDRFSGSGSGTDFTLKISRVEAEDVGVYYC. The complementarity-determining-3 stretch occupies residues 114 to 120; that stretch reads MQSIQLP.

Immunoglobulins are composed of two identical heavy chains and two identical light chains; disulfide-linked.

The protein localises to the secreted. It is found in the cell membrane. Its function is as follows. V region of the variable domain of immunoglobulin light chains that participates in the antigen recognition. Immunoglobulins, also known as antibodies, are membrane-bound or secreted glycoproteins produced by B lymphocytes. In the recognition phase of humoral immunity, the membrane-bound immunoglobulins serve as receptors which, upon binding of a specific antigen, trigger the clonal expansion and differentiation of B lymphocytes into immunoglobulins-secreting plasma cells. Secreted immunoglobulins mediate the effector phase of humoral immunity, which results in the elimination of bound antigens. The antigen binding site is formed by the variable domain of one heavy chain, together with that of its associated light chain. Thus, each immunoglobulin has two antigen binding sites with remarkable affinity for a particular antigen. The variable domains are assembled by a process called V-(D)-J rearrangement and can then be subjected to somatic hypermutations which, after exposure to antigen and selection, allow affinity maturation for a particular antigen. The sequence is that of Immunoglobulin kappa variable 2D-29 from Homo sapiens (Human).